Here is a 486-residue protein sequence, read N- to C-terminus: MDIFYNLIKCLIFSTYWLLIANITFRVLIKRRNIPYSMSWLLTIYIIPFIGISIWFFFGELYLGKRQKKIANRIWSISNKWLHELKSCTYIFQIKNSEVATSIFQLCKNRQGLHGIKSKKIKLLTNTKKIMQILIRDIYLARKNIEMVFYIWKPGGMADDVAIALIDSAKRGIHCRLMLDSAGSIEFFQSPWVEIMRKSGIQVVEALKVNLLRVFLRRVDVRQHRKIILIDNYIAYSGSMNLVDPYLFKKSSEIGQWIDLMTRIEGPIATTMGIIYSCDWEIETGLKILPQLPNKKMLENQSNKNASIQVIASGPGFLKNMIHQALLTAIYSAKRELIITTPYLVPSEDLLEAICTAAQRGVEVSIIIPLYNDSILVKWASRVFFSELLEAGVKIFQFQKGLLHSKSILVDQQLSLIGTVNLDMRSLWLNFEITLVIDDSDFGRNLFCIQNKYISDSQLIDKKAWSMRAYWKRILEKIFYFLSPLL.

Helical transmembrane passes span 3–23 and 38–58; these read IFYNLIKCLIFSTYWLLIANI and MSWLLTIYIIPFIGISIWFFF. 2 consecutive PLD phosphodiesterase domains span residues 219 to 246 and 399 to 426; these read VDVRQHRKIILIDNYIAYSGSMNLVDPY and QKGLLHSKSILVDQQLSLIGTVNLDMRS. Residues H224, K226, D231, H404, K406, and D411 contribute to the active site.

The protein belongs to the phospholipase D family. Cardiolipin synthase subfamily. ClsA sub-subfamily.

The protein resides in the cell inner membrane. The enzyme catalyses 2 a 1,2-diacyl-sn-glycero-3-phospho-(1'-sn-glycerol) = a cardiolipin + glycerol. Catalyzes the reversible phosphatidyl group transfer from one phosphatidylglycerol molecule to another to form cardiolipin (CL) (diphosphatidylglycerol) and glycerol. This Buchnera aphidicola subsp. Acyrthosiphon pisum (strain APS) (Acyrthosiphon pisum symbiotic bacterium) protein is Cardiolipin synthase A.